The sequence spans 554 residues: DNA ligase (554 aa).

Glu253 provides a ligand contact to ATP. Lys255 acts as the N6-AMP-lysine intermediate in catalysis. Arg260, Arg275, Glu304, Phe344, Arg418, and Lys424 together coordinate ATP.

The protein belongs to the ATP-dependent DNA ligase family. The cofactor is Mg(2+).

The catalysed reaction is ATP + (deoxyribonucleotide)n-3'-hydroxyl + 5'-phospho-(deoxyribonucleotide)m = (deoxyribonucleotide)n+m + AMP + diphosphate.. DNA ligase that seals nicks in double-stranded DNA during DNA replication, DNA recombination and DNA repair. This chain is DNA ligase, found in Haloarcula marismortui (strain ATCC 43049 / DSM 3752 / JCM 8966 / VKM B-1809) (Halobacterium marismortui).